Reading from the N-terminus, the 185-residue chain is Large ribosomal subunit protein uL5 (185 aa).

It belongs to the universal ribosomal protein uL5 family. Part of the 50S ribosomal subunit; part of the 5S rRNA/L5/L18/L25 subcomplex. Contacts the 5S rRNA and the P site tRNA. Forms a bridge to the 30S subunit in the 70S ribosome.

In terms of biological role, this is one of the proteins that bind and probably mediate the attachment of the 5S RNA into the large ribosomal subunit, where it forms part of the central protuberance. In the 70S ribosome it contacts protein S13 of the 30S subunit (bridge B1b), connecting the 2 subunits; this bridge is implicated in subunit movement. Contacts the P site tRNA; the 5S rRNA and some of its associated proteins might help stabilize positioning of ribosome-bound tRNAs. The protein is Large ribosomal subunit protein uL5 of Parvibaculum lavamentivorans (strain DS-1 / DSM 13023 / NCIMB 13966).